A 919-amino-acid polypeptide reads, in one-letter code: MEAPEYLDLDEIDFSDDISYSVTSLKTIPELCRRCDTQNEDRSVSSSSWNCGISTLITNTQKPTGIADVYSKFRPVKRVSPLKHQPETLENNESDDQKNQKVVEYQKGGESDLGPQPQELGPGDGVGGPPGKSSEPSTSLGELEHYDLDMDEILDVPYIKSSQQLASFTKVTSEKRILGLCTTINGLSGKACSTGSSESSSSNMAPFCVLSPVKSPHLRKASAVIHDQHKLSTEETEISPPLVKCGSAYEPENQSKDFLNKTFSDPHGRKVEKTTPDCQLRAFHLQSSAAESKPEEQVSGLNRTSSQGPEERSEYLKKVKSILNIVKEGQISLLPHLAADNLDKIHDENGNNLLHIAASQGHAECLQHLTSLMGEDCLNERNTEKLTPAGLAIKNGQLECVRWMVSETEAIAELSCSKDFPSLIHYAGCYGQEKILLWLLQFMQEQGISLDEVDQDGNSAVHVASQHGYLGCIQTLVEYGANVTMQNHAGEKPSQSAERQGHTLCSRYLVVVETCMSLASQVVKLTKQLKEQTVERVTLQNQLQQFLEAQKSEGKSLPSSPSSPSSPASRKSQWKSPDADDDSVAKSKPGVQEGIQVLGSLSASSRARPKAKDEDSDKILRQLLGKEISENVCTQEKLSLEFQDAQASSRNSKKIPLEKRELKLARLRQLMQRSLSESDTDSNNSEDPKTTPVRKADRPRPQPIVESVESMDSAESLHLMIKKHTLASGGRRFPFSIKASKSLDGHSPSPTSESSEPDLESQYPGSGSIPPNQPSGDPQQPSPDSTAAQKVATSPKSALKSPSSKRRTSQNLKLRVTFEEPVVQMEQPSLELNGEKDKDKGRTLQRTSTSNESGDQLKRPFGAFRSIMETLSGNQNNNNNYQAANQLKTSTLPLTSLGRKTDAKGNPASSASKGKNKAA.

3 disordered regions span residues 80–99, 108–140, and 287–313; these read SPLKHQPETLENNESDDQKN, GGESDLGPQPQELGPGDGVGGPPGKSSEPSTSL, and SSAAESKPEEQVSGLNRTSSQGPEERS. The span at 299 to 308 shows a compositional bias: polar residues; it reads SGLNRTSSQG. ANK repeat units follow at residues 349 to 380, 384 to 413, 419 to 448, and 456 to 485; these read NGNNLLHIAASQGHAECLQHLTSLMGEDCLNE, EKLTPAGLAIKNGQLECVRWMVSETEAIAE, DFPSLIHYAGCYGQEKILLWLLQFMQEQGI, and DGNSAVHVASQHGYLGCIQTLVEYGANVTM. The stretch at 515–552 forms a coiled coil; the sequence is CMSLASQVVKLTKQLKEQTVERVTLQNQLQQFLEAQKS. Disordered regions lie at residues 549-615, 666-713, and 728-919; these read AQKS…KDED, RLRQ…SMDS, and SGGR…NKAA. Residues 555–571 are compositionally biased toward low complexity; it reads KSLPSSPSSPSSPASRK. An ANK 5 repeat occupies 603–632; it reads ASSRARPKAKDEDSDKILRQLLGKEISENV. Residues 667 to 685 show a composition bias toward low complexity; that stretch reads LRQLMQRSLSESDTDSNNS. Residues 686–700 show a composition bias toward basic and acidic residues; sequence EDPKTTPVRKADRPR. The ANK 6 repeat unit spans residues 699–729; that stretch reads PRPQPIVESVESMDSAESLHLMIKKHTLASG. The segment covering 774 to 785 has biased composition (low complexity); it reads PSGDPQQPSPDS. The segment covering 833–842 has biased composition (basic and acidic residues); it reads NGEKDKDKGR. Over residues 844–854 the composition is skewed to polar residues; it reads LQRTSTSNESG. Low complexity predominate over residues 874–886; the sequence is NQNNNNNYQAANQ.

Homodimer. Heterodimer of isoform 1 and isoform 2. Interacts with SIAH1, SIAH2, SNCA, RNF19A and PRKN. Isoform 2 has a strong tendency to form aggregates and can sequester isoform 1. In terms of processing, ubiquitinated; mediated by SIAH1, SIAH2 or RNF19A and leading to its subsequent proteasomal degradation. In the absence of proteasomal degradation, ubiquitinated SNCAIP accumulates in cytoplasmic inclusion bodies. Isoform 2 is subject to limited ubiquitination that does not lead to proteasomal degradation. As to expression, detected in brain (at protein level). Widely expressed, with highest levels in brain, heart and placenta.

It is found in the cytoplasm. Functionally, isoform 2 inhibits the ubiquitin ligase activity of SIAH1 and inhibits proteasomal degradation of target proteins. Isoform 2 inhibits autoubiquitination and proteasomal degradation of SIAH1, and thereby increases cellular levels of SIAH. Isoform 2 modulates SNCA monoubiquitination by SIAH1. The sequence is that of Synphilin-1 (SNCAIP) from Homo sapiens (Human).